Reading from the N-terminus, the 476-residue chain is Bifunctional protein HldE (476 aa).

Residues 1-319 (MKISLPAFEK…AALNLSHGES (319 aa)) are ribokinase. 195–198 (NMSE) provides a ligand contact to ATP. Residue D264 is part of the active site. A cytidylyltransferase region spans residues 345–476 (MTNGCFDILH…AIIENIMAKQ (132 aa)).

This sequence in the N-terminal section; belongs to the carbohydrate kinase PfkB family. It in the C-terminal section; belongs to the cytidylyltransferase family. As to quaternary structure, homodimer.

It catalyses the reaction D-glycero-beta-D-manno-heptose 7-phosphate + ATP = D-glycero-beta-D-manno-heptose 1,7-bisphosphate + ADP + H(+). It carries out the reaction D-glycero-beta-D-manno-heptose 1-phosphate + ATP + H(+) = ADP-D-glycero-beta-D-manno-heptose + diphosphate. The protein operates within nucleotide-sugar biosynthesis; ADP-L-glycero-beta-D-manno-heptose biosynthesis; ADP-L-glycero-beta-D-manno-heptose from D-glycero-beta-D-manno-heptose 7-phosphate: step 1/4. It participates in nucleotide-sugar biosynthesis; ADP-L-glycero-beta-D-manno-heptose biosynthesis; ADP-L-glycero-beta-D-manno-heptose from D-glycero-beta-D-manno-heptose 7-phosphate: step 3/4. Its function is as follows. Catalyzes the phosphorylation of D-glycero-D-manno-heptose 7-phosphate at the C-1 position to selectively form D-glycero-beta-D-manno-heptose-1,7-bisphosphate. Functionally, catalyzes the ADP transfer from ATP to D-glycero-beta-D-manno-heptose 1-phosphate, yielding ADP-D-glycero-beta-D-manno-heptose. This is Bifunctional protein HldE from Shewanella loihica (strain ATCC BAA-1088 / PV-4).